The primary structure comprises 76 residues: Parvalbumin beta 3 (76 aa).

The residue at position 1 (alanine 1) is an N-acetylalanine. The 36-residue stretch at 31 to 66 (KSPEEVKKFFAIIDQDHSGFIEEEELKLFLQTFSAG) folds into the EF-hand domain. Ca(2+) contacts are provided by aspartate 44, aspartate 46, serine 48, phenylalanine 50, glutamate 52, and glutamate 55.

It belongs to the parvalbumin family.

In muscle, parvalbumin is thought to be involved in relaxation after contraction. It binds two calcium ions. The polypeptide is Parvalbumin beta 3 (Merluccius polylepis (Southern hake)).